A 257-amino-acid chain; its full sequence is Distal membrane-arm assembly complex protein 2 (257 aa).

The residue at position 253 (Ser-253) is a Phosphoserine.

It belongs to the ATP synthase subunit s family. Interacts with incompletely assembled mitochondrial NADH:ubiquinone oxidoreductase complex (complex I).

The protein localises to the mitochondrion. Functionally, required for the assembly of the mitochondrial NADH:ubiquinone oxidoreductase complex (complex I). Involved in the assembly of the distal region of complex I. This chain is Distal membrane-arm assembly complex protein 2, found in Homo sapiens (Human).